We begin with the raw amino-acid sequence, 616 residues long: Chaperone protein HscA (616 aa).

This sequence belongs to the heat shock protein 70 family.

Chaperone involved in the maturation of iron-sulfur cluster-containing proteins. Has a low intrinsic ATPase activity which is markedly stimulated by HscB. Involved in the maturation of IscU. The chain is Chaperone protein HscA from Klebsiella pneumoniae (strain 342).